The primary structure comprises 390 residues: Formate-dependent phosphoribosylglycinamide formyltransferase (390 aa).

N(1)-(5-phospho-beta-D-ribosyl)glycinamide contacts are provided by residues 19 to 20 and Glu-79; that span reads EL. ATP contacts are provided by residues Arg-111, Lys-152, 157-162, 192-195, and Glu-200; these read SSGKGQ and EGFV. The 190-residue stretch at 116–305 folds into the ATP-grasp domain; sequence RLAAEELGLP…EFAIHARAIL (190 aa). Mg(2+) is bound by residues Glu-264 and Glu-276. N(1)-(5-phospho-beta-D-ribosyl)glycinamide contacts are provided by residues Asp-283, Lys-353, and 360 to 361; that span reads RR.

This sequence belongs to the PurK/PurT family. In terms of assembly, homodimer.

It catalyses the reaction N(1)-(5-phospho-beta-D-ribosyl)glycinamide + formate + ATP = N(2)-formyl-N(1)-(5-phospho-beta-D-ribosyl)glycinamide + ADP + phosphate + H(+). It functions in the pathway purine metabolism; IMP biosynthesis via de novo pathway; N(2)-formyl-N(1)-(5-phospho-D-ribosyl)glycinamide from N(1)-(5-phospho-D-ribosyl)glycinamide (formate route): step 1/1. Involved in the de novo purine biosynthesis. Catalyzes the transfer of formate to 5-phospho-ribosyl-glycinamide (GAR), producing 5-phospho-ribosyl-N-formylglycinamide (FGAR). Formate is provided by PurU via hydrolysis of 10-formyl-tetrahydrofolate. This is Formate-dependent phosphoribosylglycinamide formyltransferase from Marinobacter nauticus (strain ATCC 700491 / DSM 11845 / VT8) (Marinobacter aquaeolei).